We begin with the raw amino-acid sequence, 552 residues long: Phosphoglucomutase (552 aa).

Ser-143 functions as the Phosphoserine intermediate in the catalytic mechanism. Positions 143, 295, 297, and 299 each coordinate Mg(2+).

This sequence belongs to the phosphohexose mutase family. Mg(2+) is required as a cofactor.

The enzyme catalyses alpha-D-glucose 1-phosphate = alpha-D-glucose 6-phosphate. Its pathway is glycolipid metabolism; diglucosyl-diacylglycerol biosynthesis. Its function is as follows. Catalyzes the interconversion between glucose-6-phosphate and alpha-glucose-1-phosphate. This is the first step in the biosynthesis of diglucosyl-diacylglycerol (Glc2-DAG), i.e. the predominant glycolipid found in the S.aureus membrane, which is also used as a membrane anchor for lipoteichoic acid (LTA). The protein is Phosphoglucomutase (pgcA) of Staphylococcus aureus (strain Mu50 / ATCC 700699).